The following is a 1817-amino-acid chain: Nuclear pore complex protein Nup98-Nup96 (1817 aa).

An FG repeats 1 region spans residues 1–156; that stretch reads MFNKSFGTPF…LFGPSSFTAA (156 aa). Positions 157–213 are GLEBS; interaction with RAE1; it reads PTGTTIKFNPPTGTDTMVKAGVSTNISTKHQCITAMKEYESKSLEELRLEDYQANRK. The tract at residues 214–480 is FG repeats 2; that stretch reads GPQNQVGAGT…NTTTATLGFG (267 aa). The disordered stretch occupies residues 512–535; sequence PFGDSPLFRNPMSDPKKKEERLKP. A Phosphoserine modification is found at Ser-524. The segment covering 525–534 has biased composition (basic and acidic residues); it reads DPKKKEERLK. Lys-563 participates in a covalent cross-link: Glycyl lysine isopeptide (Lys-Gly) (interchain with G-Cter in SUMO2). Lys-603 carries the post-translational modification N6-acetyllysine; alternate. Residue Lys-603 forms a Glycyl lysine isopeptide (Lys-Gly) (interchain with G-Cter in SUMO2); alternate linkage. Residues Ser-608, Ser-612, Ser-618, Ser-623, Ser-625, and Ser-653 each carry the phosphoserine modification. The tract at residues 614-633 is disordered; that stretch reads VNRDSENLASPSEYPENGER. A disordered region spans residues 662–682; the sequence is PIAKPIPQTPESAGNKHSNSN. A Glycyl lysine isopeptide (Lys-Gly) (interchain with G-Cter in SUMO2) cross-link involves residue Lys-665. Thr-670 is subject to Phosphothreonine. Residues 670–682 show a composition bias toward polar residues; it reads TPESAGNKHSNSN. 4 positions are modified to phosphoserine: Ser-673, Ser-681, Ser-683, and Ser-839. The Peptidase S59 domain occupies 738–880; that stretch reads KVGYYTIPSM…GSWVFKVSHF (143 aa). Ser-881 acts as the Nucleophile in catalysis. The interval 886–937 is disordered; it reads QDSDEEEEEHPSKTSTKKLKTAPLPPASQTTPLQMALNGKPAPPPQSQSPEV. A phosphoserine mark is found at Ser-888, Ser-897, and Ser-934. Residue Thr-1000 is modified to Phosphothreonine. Phosphoserine is present on residues Ser-1023, Ser-1028, Ser-1043, Ser-1060, and Ser-1064. The residue at position 1070 (Thr-1070) is a Phosphothreonine. Ser-1329 is subject to Phosphoserine. Thr-1772 bears the Phosphothreonine mark.

The protein belongs to the nucleoporin GLFG family. Part of the nuclear pore complex (NPC). Interacts directly with NUP96. Part of the Nup160 subcomplex in the nuclear pore which is composed of NUP160, NUP133, NUP107 and NUP96; this complex plays a role in RNA export and in tethering NUP98 and NUP153 to the nucleus. Interacts with RAE1. Does not interact with TPR. Interacts with NUP88. Interacts directly with NUP88 and NUP214, subunits of the cytoplasmic filaments of the NPC. Interacts (via N-terminus) with DHX9 (via DRBM, OB-fold and RGG domains); this interaction occurs in a RNA-dependent manner and stimulates DHX9-mediated ATPase activity. In terms of assembly, (Microbial infection) Interacts with HIV-1 capsid protein P24 and nucleocapsid protein P7 (in vitro); the interaction may promote the integration of the virus in the host nucleus (in vitro). As to quaternary structure, (Microbial infection) Interacts with vesicular stomatitis virus protein M. (Microbial infection) Interacts with SARS coronavirus-2/SARS-CoV-2 ORF6 protein; the interaction blocks STAT1 nuclear translocation, antagonizes interferon signaling and blocks mRNA nuclear export (ex vivo). In terms of assembly, (Microbial infection) Interacts with SARS coronavirus/SARS-CoV ORF6 protein. Post-translationally, isoform 1 to isoform 4 are autoproteolytically cleaved to yield Nup98 and Nup96 or Nup98 only, respectively. Cleaved Nup98 is necessary for the targeting of Nup98 to the nuclear pore and the interaction with Nup96. In terms of processing, proteolytically degraded after poliovirus (PV) infection; degradation is partial and NCP- and TPR-binding domains withstand degradation.

It is found in the nucleus membrane. The protein resides in the nucleus. Its subcellular location is the nuclear pore complex. It localises to the nucleoplasm. Functionally, plays a role in the nuclear pore complex (NPC) assembly and/or maintenance. NUP98 and NUP96 are involved in the bidirectional transport across the NPC. May anchor NUP153 and TPR to the NPC. In cooperation with DHX9, plays a role in transcription and alternative splicing activation of a subset of genes. Involved in the localization of DHX9 in discrete intranuclear foci (GLFG-body). In terms of biological role, (Microbial infection) Interacts with HIV-1 capsid protein P24 and nucleocapsid protein P7 and may thereby promote the integration of the virus in the host nucleus (in vitro). Binding affinity to HIV-1 CA-NC complexes bearing the capsid change Asn-74-Asp is reduced (in vitro). This is Nuclear pore complex protein Nup98-Nup96 from Homo sapiens (Human).